A 698-amino-acid polypeptide reads, in one-letter code: Elongation factor G (698 aa).

In terms of domain architecture, tr-type G spans 8–284 (ANVRNIGIMA…AVVDFLPSPL (277 aa)). GTP contacts are provided by residues 17–24 (AHIDAGKT), 81–85 (DTPGH), and 135–138 (NKLD). The interval 289 to 309 (IEGTGTDGETPLQRKPSTSEP) is disordered.

This sequence belongs to the TRAFAC class translation factor GTPase superfamily. Classic translation factor GTPase family. EF-G/EF-2 subfamily.

The protein resides in the cytoplasm. In terms of biological role, catalyzes the GTP-dependent ribosomal translocation step during translation elongation. During this step, the ribosome changes from the pre-translocational (PRE) to the post-translocational (POST) state as the newly formed A-site-bound peptidyl-tRNA and P-site-bound deacylated tRNA move to the P and E sites, respectively. Catalyzes the coordinated movement of the two tRNA molecules, the mRNA and conformational changes in the ribosome. The chain is Elongation factor G from Salinispora arenicola (strain CNS-205).